Reading from the N-terminus, the 50-residue chain is FLGTINLSLCEQERDADEEERRDEPDGSNVEVEKRFLSHIAGFLSNLFGK.

The first 10 residues, 1–10 (FLGTINLSLC), serve as a signal peptide directing secretion. A propeptide spanning residues 11-35 (EQERDADEEERRDEPDGSNVEVEKR) is cleaved from the precursor. Position 48 is a phenylalanine amide (Phe-48).

Expressed by the skin glands.

The protein localises to the secreted. Its subcellular location is the target cell membrane. Its function is as follows. Amphipathic alpha-helical antimicrobial peptide with potent activity against some Gram-positive bacteria (MIC=4-&gt;80 uM), potent activity against fungi (MIC=10-20 uM), and no activity against Gram-negative bacteria. Does not display anti-leishmania activity. Does not show hemolytic activity (LC(50)&gt;80 uM). This chain is Temporin-SHc, found in Pelophylax saharicus (Sahara frog).